Here is a 156-residue protein sequence, read N- to C-terminus: Probable cyclic pyranopterin monophosphate synthase (156 aa).

Residues 73 to 75 and 109 to 110 each bind substrate; these read LCH and ME. Asp124 is a catalytic residue.

The protein belongs to the MoaC family. In terms of assembly, homohexamer; trimer of dimers.

It catalyses the reaction (8S)-3',8-cyclo-7,8-dihydroguanosine 5'-triphosphate = cyclic pyranopterin phosphate + diphosphate. The protein operates within cofactor biosynthesis; molybdopterin biosynthesis. Functionally, catalyzes the conversion of (8S)-3',8-cyclo-7,8-dihydroguanosine 5'-triphosphate to cyclic pyranopterin monophosphate (cPMP). This is Probable cyclic pyranopterin monophosphate synthase from Pyrococcus furiosus (strain ATCC 43587 / DSM 3638 / JCM 8422 / Vc1).